Reading from the N-terminus, the 123-residue chain is Small ribosomal subunit protein uS12 (123 aa).

At Asp-89 the chain carries 3-methylthioaspartic acid.

It belongs to the universal ribosomal protein uS12 family. In terms of assembly, part of the 30S ribosomal subunit. Contacts proteins S8 and S17. May interact with IF1 in the 30S initiation complex.

Functionally, with S4 and S5 plays an important role in translational accuracy. In terms of biological role, interacts with and stabilizes bases of the 16S rRNA that are involved in tRNA selection in the A site and with the mRNA backbone. Located at the interface of the 30S and 50S subunits, it traverses the body of the 30S subunit contacting proteins on the other side and probably holding the rRNA structure together. The combined cluster of proteins S8, S12 and S17 appears to hold together the shoulder and platform of the 30S subunit. The chain is Small ribosomal subunit protein uS12 from Trichlorobacter lovleyi (strain ATCC BAA-1151 / DSM 17278 / SZ) (Geobacter lovleyi).